The sequence spans 105 residues: Nucleoid-associated protein Sca_0120 (105 aa).

Residues 1-36 are disordered; sequence MRGGGNMQQMMKQMQKMQKKMAEEQEKLKDEKVEGS. Residues 7–16 are compositionally biased toward low complexity; the sequence is MQQMMKQMQK. Positions 20 to 34 are enriched in basic and acidic residues; the sequence is KMAEEQEKLKDEKVE.

The protein belongs to the YbaB/EbfC family. Homodimer.

Its subcellular location is the cytoplasm. The protein localises to the nucleoid. Binds to DNA and alters its conformation. May be involved in regulation of gene expression, nucleoid organization and DNA protection. In Staphylococcus carnosus (strain TM300), this protein is Nucleoid-associated protein Sca_0120.